The sequence spans 120 residues: UPF0231 protein YacL (120 aa).

This sequence belongs to the UPF0231 family.

The polypeptide is UPF0231 protein YacL (Salmonella typhi).